Consider the following 64-residue polypeptide: Large ribosomal subunit protein bL32 (64 aa).

Residues 1–15 show a composition bias toward basic residues; sequence MAVPKRKVSKSRRDS. The tract at residues 1 to 21 is disordered; it reads MAVPKRKVSKSRRDSRRAQTF.

The protein belongs to the bacterial ribosomal protein bL32 family.

This Symbiobacterium thermophilum (strain DSM 24528 / JCM 14929 / IAM 14863 / T) protein is Large ribosomal subunit protein bL32.